We begin with the raw amino-acid sequence, 781 residues long: Putative amine oxidase [copper-containing] (781 aa).

A signal peptide spans Met-1–Ala-34. Cysteines 199 and 203 form a disulfide. Residue Phe-385 to Asn-395 coordinates substrate. The active-site Proton acceptor is Asp-387. Cys-405 and Cys-432 form a disulfide bridge. A substrate-binding site is contributed by Ile-472–Tyr-477. The active-site Schiff-base intermediate with substrate; via topaquinone is the Tyr-475. Position 475 is a 2',4',5'-topaquinone (Tyr-475). Cu cation contacts are provided by His-525 and His-527. Ca(2+) contacts are provided by Asp-534, Asp-536, Glu-579, Phe-671, Asp-674, Glu-676, Asp-682, and Leu-683. 2 residues coordinate Mn(2+): Asp-534 and Asp-536. Asp-682 contributes to the Mn(2+) binding site. His-693 is a binding site for Cu cation.

This sequence belongs to the copper/topaquinone oxidase family. As to quaternary structure, homodimer. The cofactor is Cu cation. Ca(2+) serves as cofactor. L-topaquinone is required as a cofactor. Requires Mn(2+) as cofactor. Post-translationally, topaquinone (TPQ) is generated by copper-dependent autoxidation of a specific tyrosyl residue. As to expression, prismatic layer of shell (at protein level). Expressed primarily in the mantle with highest level in the mantle edge and lower level in the mantle pallium.

The protein localises to the secreted. The protein is Putative amine oxidase [copper-containing] of Margaritifera margaritifera (Freshwater pearl mussel).